The primary structure comprises 166 residues: NADPH-dependent 7-cyano-7-deazaguanine reductase (166 aa).

Cys-57 serves as the catalytic Thioimide intermediate. Asp-64 serves as the catalytic Proton donor. Substrate is bound by residues 79 to 81 (VES) and 98 to 99 (HE).

Belongs to the GTP cyclohydrolase I family. QueF type 1 subfamily.

It is found in the cytoplasm. It catalyses the reaction 7-aminomethyl-7-carbaguanine + 2 NADP(+) = 7-cyano-7-deazaguanine + 2 NADPH + 3 H(+). It participates in tRNA modification; tRNA-queuosine biosynthesis. Functionally, catalyzes the NADPH-dependent reduction of 7-cyano-7-deazaguanine (preQ0) to 7-aminomethyl-7-deazaguanine (preQ1). The protein is NADPH-dependent 7-cyano-7-deazaguanine reductase of Staphylococcus haemolyticus (strain JCSC1435).